Reading from the N-terminus, the 234-residue chain is tRNA (guanine-N(1)-)-methyltransferase (234 aa).

S-adenosyl-L-methionine is bound by residues Gly-112 and 132–137 (IGDFIL).

It belongs to the RNA methyltransferase TrmD family. As to quaternary structure, homodimer.

Its subcellular location is the cytoplasm. It catalyses the reaction guanosine(37) in tRNA + S-adenosyl-L-methionine = N(1)-methylguanosine(37) in tRNA + S-adenosyl-L-homocysteine + H(+). Functionally, specifically methylates guanosine-37 in various tRNAs. The chain is tRNA (guanine-N(1)-)-methyltransferase from Campylobacter jejuni subsp. jejuni serotype O:6 (strain 81116 / NCTC 11828).